The following is a 227-amino-acid chain: ATP-dependent dethiobiotin synthetase BioD (227 aa).

Position 12 to 17 (Asp-12 to Val-17) interacts with ATP. Mg(2+) is bound at residue Thr-16. Lys-37 is an active-site residue. Substrate is bound at residue Thr-41. ATP is bound by residues Asp-50, Glu-110–Gly-113, Gly-171–Ser-172, and Pro-201–Gly-203. Mg(2+) contacts are provided by Asp-50 and Glu-110.

Belongs to the dethiobiotin synthetase family. As to quaternary structure, homodimer. Mg(2+) is required as a cofactor.

Its subcellular location is the cytoplasm. The catalysed reaction is (7R,8S)-7,8-diammoniononanoate + CO2 + ATP = (4R,5S)-dethiobiotin + ADP + phosphate + 3 H(+). It participates in cofactor biosynthesis; biotin biosynthesis; biotin from 7,8-diaminononanoate: step 1/2. In terms of biological role, catalyzes a mechanistically unusual reaction, the ATP-dependent insertion of CO2 between the N7 and N8 nitrogen atoms of 7,8-diaminopelargonic acid (DAPA, also called 7,8-diammoniononanoate) to form a ureido ring. This Rhodococcus erythropolis (strain PR4 / NBRC 100887) protein is ATP-dependent dethiobiotin synthetase BioD.